A 313-amino-acid chain; its full sequence is uncharacterized protein (313 aa).

2 consecutive transmembrane segments (helical) span residues 42 to 64 (LVVL…LFLT) and 74 to 96 (VRAY…TLYV).

The protein resides in the cell membrane. This is an uncharacterized protein from Treponema pallidum (strain Nichols).